The chain runs to 221 residues: Endonuclease V (221 aa).

Positions 44 and 112 each coordinate Mg(2+).

Belongs to the endonuclease V family. It depends on Mg(2+) as a cofactor.

The protein resides in the cytoplasm. The enzyme catalyses Endonucleolytic cleavage at apurinic or apyrimidinic sites to products with a 5'-phosphate.. DNA repair enzyme involved in the repair of deaminated bases. Selectively cleaves double-stranded DNA at the second phosphodiester bond 3' to a deoxyinosine leaving behind the intact lesion on the nicked DNA. The polypeptide is Endonuclease V (Nostoc sp. (strain PCC 7120 / SAG 25.82 / UTEX 2576)).